A 241-amino-acid polypeptide reads, in one-letter code: Fatty acid metabolism regulator protein (241 aa).

In terms of domain architecture, HTH gntR-type spans 6–74 (KGPASFAEKY…HGKPTRVNNF (69 aa)). Residues 34-53 (ERELSELIGVTRTTLREVLQ) constitute a DNA-binding region (H-T-H motif).

Homodimer.

It is found in the cytoplasm. Its function is as follows. Multifunctional regulator of fatty acid metabolism. In Shewanella sp. (strain ANA-3), this protein is Fatty acid metabolism regulator protein.